The following is a 542-amino-acid chain: CTP synthase (542 aa).

The amidoligase domain stretch occupies residues 1–265; sequence MTRYVFITGG…DREVLALFGI (265 aa). Serine 13 is a CTP binding site. UTP is bound at residue serine 13. ATP contacts are provided by residues 14–19 and aspartate 71; that span reads SLGKGL. Positions 71 and 139 each coordinate Mg(2+). CTP is bound by residues 146–148, 186–191, and lysine 222; these read DIE and KTKPTQ. UTP contacts are provided by residues 186–191 and lysine 222; that span reads KTKPTQ. Position 238 to 240 (238 to 240) interacts with ATP; that stretch reads RDV. Residues 291-541 enclose the Glutamine amidotransferase type-1 domain; it reads SIAIVGKYTG…IGAAVVQSRL (251 aa). L-glutamine is bound at residue glycine 353. Cysteine 380 serves as the catalytic Nucleophile; for glutamine hydrolysis. Residues 381–384, glutamate 404, and arginine 469 contribute to the L-glutamine site; that span reads FGMQ. Active-site residues include histidine 514 and glutamate 516.

This sequence belongs to the CTP synthase family. In terms of assembly, homotetramer.

The catalysed reaction is UTP + L-glutamine + ATP + H2O = CTP + L-glutamate + ADP + phosphate + 2 H(+). The enzyme catalyses L-glutamine + H2O = L-glutamate + NH4(+). It catalyses the reaction UTP + NH4(+) + ATP = CTP + ADP + phosphate + 2 H(+). It functions in the pathway pyrimidine metabolism; CTP biosynthesis via de novo pathway; CTP from UDP: step 2/2. Its activity is regulated as follows. Allosterically activated by GTP, when glutamine is the substrate; GTP has no effect on the reaction when ammonia is the substrate. The allosteric effector GTP functions by stabilizing the protein conformation that binds the tetrahedral intermediate(s) formed during glutamine hydrolysis. Inhibited by the product CTP, via allosteric rather than competitive inhibition. In terms of biological role, catalyzes the ATP-dependent amination of UTP to CTP with either L-glutamine or ammonia as the source of nitrogen. Regulates intracellular CTP levels through interactions with the four ribonucleotide triphosphates. The chain is CTP synthase from Methylobacterium nodulans (strain LMG 21967 / CNCM I-2342 / ORS 2060).